Here is a 113-residue protein sequence, read N- to C-terminus: Class I hydrophobin 1 (113 aa).

Positions 1-17 (MQFKFLSTVALATLAVA) are cleaved as a signal peptide. Intrachain disulfides connect cysteine 32–cysteine 92, cysteine 39–cysteine 86, cysteine 40–cysteine 73, and cysteine 93–cysteine 106.

Belongs to the fungal hydrophobin family. Self-assembles to form functional amyloid fibrils called rodlets. Self-assembly into fibrillar rodlets occurs spontaneously at hydrophobic:hydrophilic interfaces and the rodlets further associate laterally to form amphipathic monolayers.

The protein resides in the secreted. Its subcellular location is the cell wall. Its function is as follows. Aerial growth, conidiation, and dispersal of filamentous fungi in the environment rely upon a capability of their secreting small amphipathic proteins called hydrophobins (HPBs) with low sequence identity. Class I can self-assemble into an outermost layer of rodlet bundles on aerial cell surfaces, conferring cellular hydrophobicity that supports fungal growth, development and dispersal; whereas Class II form highly ordered films at water-air interfaces through intermolecular interactions but contribute nothing to the rodlet structure. CoH1 is an asexual monokaryon-specific class I hydrophobin that is involved in aerial growth of mycelia. This Coprinopsis cinerea (Inky cap fungus) protein is Class I hydrophobin 1.